A 215-amino-acid chain; its full sequence is Putative ribosome biogenesis protein slx9-like (215 aa).

Disordered stretches follow at residues 49–121, 133–157, and 189–215; these read IIPS…GLGM, DSMKLQPKTKGPKLTNEKRKKMSLK, and LQNQKIKQEQDFKPNNNNNNRNKLKRK.

The protein belongs to the SLX9 family.

The protein localises to the nucleus. Its subcellular location is the nucleolus. In terms of biological role, involved in ribosome biogenesis. In Dictyostelium discoideum (Social amoeba), this protein is Putative ribosome biogenesis protein slx9-like.